Consider the following 485-residue polypeptide: MAAAQPRLPAGAAMVRRLARGCWSAFWDYETPKVIVVRNRRLGFVHRMVQLLILLYFVWYVFIVQKSYQDSETGPESSIITKVKGITMSEHKVWDVEEYVKPPEGGSVVSIITRIEVTPSQTLGTCPESMRVHSSTCHLDDDCVAGQLDMQGNGIRTGRCVPYYHGDSKTCEVSAWCPVEDGTSENHFLGKMAPNFTILIKNSIHYPKFKFSKGNIASQKSDYLKHCTFDQDSDPYCPIFRLGFIVEQAGENFTELAHKGGVIGVIINWNCDLDLSESECNPKYSFRRLDPKYDPASSGYNFRFAKYYKINGTTTTRTLIKAYGIRIDVIVHGQAGKFSLIPTIINLATALTSIGVGSFLCDWILLTFMNKNKLYSHKKFDKVRTPRHPSSRWPVTLALVLGQIPPPPSHYSQDQPPSLPSGEGPALGEGAELPLAVQPPRSCSSSALTEQVVDTLDQHMGQRPPVPEPSQQDSTSTDPKGLAQL.

Over Met1–Gly43 the chain is Cytoplasmic. 6 cysteine pairs are disulfide-bonded: Cys22–Cys443, Cys126–Cys177, Cys137–Cys160, Cys143–Cys171, Cys227–Cys237, and Cys271–Cys280. Residues Phe44–Val64 traverse the membrane as a helical segment. The Extracellular segment spans residues Gln65–Ser339. The ATP site is built by Lys82 and Lys84. Residue Asn195 is glycosylated (N-linked (GlcNAc...) asparagine). Thr197 contributes to the ATP binding site. An N-linked (GlcNAc...) asparagine glycan is attached at Asn252. The ATP site is built by Ser297, Asn301, and Arg303. N-linked (GlcNAc...) asparagine glycosylation is present at Asn311. Lys321 is a binding site for ATP. The tract at residues Ala322–Ala335 is pore-forming motif. The helical transmembrane segment at Leu340 to Leu360 threads the bilayer. Over Cys361–Leu485 the chain is Cytoplasmic. A disordered region spans residues Pro406–Leu485. Over residues Pro420–Ala436 the composition is skewed to low complexity. The span at Pro469 to Asp478 shows a compositional bias: polar residues.

It belongs to the P2X receptor family. Homotrimer and heterotrimer; functional P2XRs are organized as homomeric and heteromeric trimers. Homotrimer. Forms heterotrimer with P2XR1. Forms heterotrimer with P2XR3. Forms heterotrimer with P2XR6.

It is found in the cell membrane. It carries out the reaction Ca(2+)(in) = Ca(2+)(out). It catalyses the reaction K(+)(in) = K(+)(out). The catalysed reaction is Na(+)(in) = Na(+)(out). With respect to regulation, fast activation by external ATP. Exhibits slow desensitization during prolonged ATP activation. Not sensitive to the ATP agonist:alpha/beta-methylene-ATP. Functionally, ATP-gated nonselective transmembrane cation channel permeable to potassium, sodium and calcium. Activation by extracellular ATP induces a variety of cellular responses, such as excitatory postsynaptic responses in sensory neurons, neuromuscular junctions (NMJ) formation, hearing, perception of taste and peristalsis. In the inner ear, regulates sound transduction and auditory neurotransmission, outer hair cell electromotility, inner ear gap junctions, and K(+) recycling. Mediates synaptic transmission between neurons and from neurons to smooth muscle. The sequence is that of P2X purinoceptor 2 (P2rx2) from Mus musculus (Mouse).